Reading from the N-terminus, the 164-residue chain is Lipoprotein signal peptidase (164 aa).

4 helical membrane passes run 8-28 (IVAA…LLFV), 39-59 (VTPF…GWFQ), 64-84 (VGAT…AIWM), and 91-111 (LATI…IDRF). Catalysis depends on residues D118 and D140. Residues 131–151 (YSWYVFNLADVAIVAGVIALL) form a helical membrane-spanning segment.

The protein belongs to the peptidase A8 family.

The protein localises to the cell inner membrane. The catalysed reaction is Release of signal peptides from bacterial membrane prolipoproteins. Hydrolyzes -Xaa-Yaa-Zaa-|-(S,diacylglyceryl)Cys-, in which Xaa is hydrophobic (preferably Leu), and Yaa (Ala or Ser) and Zaa (Gly or Ala) have small, neutral side chains.. It participates in protein modification; lipoprotein biosynthesis (signal peptide cleavage). This protein specifically catalyzes the removal of signal peptides from prolipoproteins. In Nitrobacter hamburgensis (strain DSM 10229 / NCIMB 13809 / X14), this protein is Lipoprotein signal peptidase.